Reading from the N-terminus, the 502-residue chain is UDP-N-acetylmuramate--L-alanine ligase (502 aa).

119-125 (GSHGKST) contributes to the ATP binding site.

The protein belongs to the MurCDEF family.

It localises to the cytoplasm. The catalysed reaction is UDP-N-acetyl-alpha-D-muramate + L-alanine + ATP = UDP-N-acetyl-alpha-D-muramoyl-L-alanine + ADP + phosphate + H(+). It functions in the pathway cell wall biogenesis; peptidoglycan biosynthesis. In terms of biological role, cell wall formation. The sequence is that of UDP-N-acetylmuramate--L-alanine ligase from Frankia casuarinae (strain DSM 45818 / CECT 9043 / HFP020203 / CcI3).